The primary structure comprises 293 residues: Protease HtpX (293 aa).

Transmembrane regions (helical) follow at residues 4–24 (IALF…VLSL) and 34–54 (GLLI…LLMS). His139 is a binding site for Zn(2+). Glu140 is a catalytic residue. His143 contacts Zn(2+). Transmembrane regions (helical) follow at residues 158-178 (VVNT…AGFL) and 193-213 (LIYF…ASII). Zn(2+) is bound at residue Glu222.

Belongs to the peptidase M48B family. Zn(2+) serves as cofactor.

The protein localises to the cell inner membrane. This is Protease HtpX from Salmonella agona (strain SL483).